A 1311-amino-acid chain; its full sequence is Kinase and exchange factor for Rac A (1311 aa).

Positions 18 to 316 constitute a Protein kinase domain; the sequence is LVFKDIIGKG…STIVTILESI (299 aa). Residues 24 to 32 and K45 each bind ATP; that span reads IGKGNFGCV. Catalysis depends on D138, which acts as the Proton acceptor. Disordered regions lie at residues 169-201, 360-426, and 446-471; these read NGSD…KNNG, QQQS…TTTT, and PLSK…LIGS. Low complexity predominate over residues 451–471; sequence QQQQQRNQNSSIIDNNSLIGS. Residues 650–679 enclose the IQ domain; it reads ELNLIIKLQSRIRGWLVRRRYKIFLSNWKL. The DH domain occupies 691–927; the sequence is QWIRLFNQLI…RETSNYIQSQ (237 aa). 2 stretches are compositionally biased toward low complexity: residues 994-1021 and 1031-1044; these read SKYN…TNSN and STSN…GNNN. 3 disordered regions span residues 994-1044, 1114-1145, and 1208-1311; these read SKYN…GNNN, NNPN…NGSI, and GTST…FSKD. Gly residues predominate over residues 1117–1137; the sequence is NGGGSNNNSIGGGGGGRGGSG. Residues 1208-1229 show a composition bias toward polar residues; it reads GTSTPERKTSLVNMSPSTTSSL. Positions 1230-1245 are enriched in low complexity; it reads NNIDSNYNNNNNNVTN. The segment covering 1246–1257 has biased composition (polar residues); sequence TPIKSVTSSPSI. Residues 1263-1276 show a composition bias toward low complexity; sequence NDNNQQPQLPSQPN. Over residues 1277–1287 the composition is skewed to polar residues; it reads EEFQFTVPTTP. A compositionally biased stretch (basic residues) spans 1290–1303; the sequence is KKKKRGSFSSKLKR.

This sequence belongs to the protein kinase superfamily. TKL Ser/Thr protein kinase family. Requires Mg(2+) as cofactor.

It catalyses the reaction L-seryl-[protein] + ATP = O-phospho-L-seryl-[protein] + ADP + H(+). It carries out the reaction L-threonyl-[protein] + ATP = O-phospho-L-threonyl-[protein] + ADP + H(+). This Dictyostelium discoideum (Social amoeba) protein is Kinase and exchange factor for Rac A (kxcA).